Reading from the N-terminus, the 111-residue chain is Nucleoid-associated protein TTE0040 (111 aa).

This sequence belongs to the YbaB/EbfC family. Homodimer.

It is found in the cytoplasm. The protein resides in the nucleoid. In terms of biological role, binds to DNA and alters its conformation. May be involved in regulation of gene expression, nucleoid organization and DNA protection. This Caldanaerobacter subterraneus subsp. tengcongensis (strain DSM 15242 / JCM 11007 / NBRC 100824 / MB4) (Thermoanaerobacter tengcongensis) protein is Nucleoid-associated protein TTE0040.